The chain runs to 34 residues: Potassium channel toxin alpha-KTx 6 hetlaxin (34 aa).

Disulfide bonds link C3–C24, C9–C29, C13–C31, and C19–C34. Cysteine amide is present on C34.

Post-translationally, contains 4 disulfide bonds. Expressed by the venom gland.

Its subcellular location is the secreted. Binds to voltage-gated potassium channels Kv1.3/KCNA3 (IC(50)=0.48 uM) and Kv1.1/KCNA1 (IC(50)=6.7 uM) and inhibits channel activity. This Heterometrus laoticus (Thai giant scorpion) protein is Potassium channel toxin alpha-KTx 6 hetlaxin.